The primary structure comprises 502 residues: ATP synthase subunit alpha (502 aa).

Residue 170–177 (GDRKTGKT) participates in ATP binding.

This sequence belongs to the ATPase alpha/beta chains family. As to quaternary structure, F-type ATPases have 2 components, CF(1) - the catalytic core - and CF(0) - the membrane proton channel. CF(1) has five subunits: alpha(3), beta(3), gamma(1), delta(1), epsilon(1). CF(0) has four main subunits: a, b, b' and c.

It is found in the cellular thylakoid membrane. The catalysed reaction is ATP + H2O + 4 H(+)(in) = ADP + phosphate + 5 H(+)(out). Its function is as follows. Produces ATP from ADP in the presence of a proton gradient across the membrane. The alpha chain is a regulatory subunit. This chain is ATP synthase subunit alpha, found in Microcystis aeruginosa (strain NIES-843 / IAM M-2473).